The primary structure comprises 173 residues: Large ribosomal subunit protein bL9 (173 aa).

This sequence belongs to the bacterial ribosomal protein bL9 family.

Its function is as follows. Binds to the 23S rRNA. The protein is Large ribosomal subunit protein bL9 of Rickettsia bellii (strain OSU 85-389).